The primary structure comprises 188 residues: Inosine triphosphate pyrophosphatase (188 aa).

12 to 17 (TGNANK) is an ITP binding site. Glutamate 40 serves as a coordination point for Mg(2+). Residues lysine 52, 68–69 (DT), lysine 85, 144–147 (FGWD), lysine 165, and 170–171 (HR) contribute to the ITP site.

Belongs to the HAM1 NTPase family. Homodimer. Mg(2+) serves as cofactor. Mn(2+) is required as a cofactor.

The protein resides in the cytoplasm. It is found in the nucleus. It carries out the reaction ITP + H2O = IMP + diphosphate + H(+). The enzyme catalyses dITP + H2O = dIMP + diphosphate + H(+). The catalysed reaction is XTP + H2O = XMP + diphosphate + H(+). Pyrophosphatase that hydrolyzes non-canonical purine nucleotides such as inosine triphosphate (ITP), deoxyinosine triphosphate (dITP) or xanthosine 5'-triphosphate (XTP) to their respective monophosphate derivatives. The enzyme does not distinguish between the deoxy- and ribose forms. Probably excludes non-canonical purines from RNA and DNA precursor pools, thus preventing their incorporation into RNA and DNA and avoiding chromosomal lesions. This Podospora anserina (strain S / ATCC MYA-4624 / DSM 980 / FGSC 10383) (Pleurage anserina) protein is Inosine triphosphate pyrophosphatase.